The sequence spans 532 residues: Probable inorganic phosphate transporter 1-9 (532 aa).

Residues 1 to 22 are Cytoplasmic-facing; it reads MPELSLLSALDAARIQWYHFKA. A helical membrane pass occupies residues 23–43; the sequence is IIVAGMGLFTDAYDLFCIAPI. Residues 44-62 are Extracellular-facing; the sequence is MKMISQIYYHKDSIGTALL. Residues 63–83 traverse the membrane as a helical segment; that stretch reads STSYAIALLGTALGQLIFGYL. The Cytoplasmic segment spans residues 84–91; the sequence is GDRVGRRK. The chain crosses the membrane as a helical span at residues 92 to 112; it reads VYGLSLLIMVFSSFGCGFSVC. Residues 113–124 lie on the Extracellular side of the membrane; it reads TTRRSCVMVSLG. A helical membrane pass occupies residues 125–145; the sequence is FFRFVLGLGIGGDYPLSATIM. Over 146-154 the chain is Cytoplasmic; the sequence is SEFANKRTR. The chain crosses the membrane as a helical span at residues 155–175; that stretch reads GAFIAAVFSMQGLGILMSSAV. At 176–207 the chain is on the extracellular side; it reads TMVVCLAFKNAGEGSSEKTNVAGLETLAPPES. Residues 208-228 traverse the membrane as a helical segment; sequence DIAWRLILMIGALPAALTFYW. Topologically, residues 229 to 292 are cytoplasmic; the sequence is RMLMPETARY…KLFSRRFLSL (64 aa). A helical membrane pass occupies residues 293–313; the sequence is HGRDLFAASANWFLVDVVFYT. Topologically, residues 314 to 343 are extracellular; it reads SNLLLSQIFNFSNKPLNSTNVYDSAFEVAK. The chain crosses the membrane as a helical span at residues 344-364; sequence LAAIVAACSTIPGYWFTVYFI. Residues 365 to 371 are Cytoplasmic-facing; that stretch reads DKIGRVK. A helical membrane pass occupies residues 372–392; it reads IQMMGFFLMAVVYLVAGIPYS. Residues 393–406 lie on the Extracellular side of the membrane; that stretch reads WYWSKHEKTNKGFM. The chain crosses the membrane as a helical span at residues 407-427; sequence VLYGLIFFFSNFGPNTTTFII. The Cytoplasmic segment spans residues 428 to 441; it reads PAELFPARFRSTCH. A helical membrane pass occupies residues 442–462; the sequence is GISGAAGKFGAIVGTVGFLWA. Residues 463–478 are Extracellular-facing; sequence TRHHEEDGFPDVKRVR. Residues 479–499 traverse the membrane as a helical segment; that stretch reads IAFLILGGVCIAGMIVTYLFT. Over 500–532 the chain is Cytoplasmic; sequence RETMGRSLEENEDEIVSTSAGSSPANELLRRQY. Residues 509-532 form a disordered region; the sequence is ENEDEIVSTSAGSSPANELLRRQY. Residues 515-524 are compositionally biased toward polar residues; the sequence is VSTSAGSSPA.

This sequence belongs to the major facilitator superfamily. Phosphate:H(+) symporter (TC 2.A.1.9) family.

It localises to the membrane. Functionally, high-affinity transporter for external inorganic phosphate. This is Probable inorganic phosphate transporter 1-9 (PHT1-9) from Arabidopsis thaliana (Mouse-ear cress).